Consider the following 141-residue polypeptide: uncharacterized protein (141 aa).

This is an uncharacterized protein from Thermoproteus tenax (TTV1).